The sequence spans 295 residues: Tyrosine recombinase XerD (295 aa).

One can recognise a Core-binding (CB) domain in the interval 1 to 85 (METIIEEYLK…TIRSFHQFAL (85 aa)). In terms of domain architecture, Tyr recombinase spans 106–289 (KLPDVLDVEE…SKTQIRQMYN (184 aa)). Active-site residues include Arg-146, Lys-170, His-241, Arg-244, and His-267. The active-site O-(3'-phospho-DNA)-tyrosine intermediate is the Tyr-276.

This sequence belongs to the 'phage' integrase family. XerD subfamily. In terms of assembly, forms a cyclic heterotetrameric complex composed of two molecules of XerC and two molecules of XerD.

It localises to the cytoplasm. In terms of biological role, site-specific tyrosine recombinase, which acts by catalyzing the cutting and rejoining of the recombining DNA molecules. The XerC-XerD complex is essential to convert dimers of the bacterial chromosome into monomers to permit their segregation at cell division. It also contributes to the segregational stability of plasmids. The sequence is that of Tyrosine recombinase XerD from Staphylococcus haemolyticus (strain JCSC1435).